A 762-amino-acid polypeptide reads, in one-letter code: Hyperosmolality-gated Ca2+ permeable channel 2.2 (762 aa).

Transmembrane regions (helical) follow at residues 3–23, 90–110, 144–164, 354–374, 402–422, 445–465, 500–520, 557–577, 594–614, and 615–635; these read VSAL…LVSL, MVIC…AFVL, LWVH…LLYF, IATL…VTFV, VITG…VPPL, KILY…GSVI, GWAG…NLIA, VIAP…YLIY, QYWP…QVIA, and LGFF…PLIL.

The protein belongs to the CSC1 (TC 1.A.17) family.

Its subcellular location is the membrane. Acts as an osmosensitive calcium-permeable cation channel. This is Hyperosmolality-gated Ca2+ permeable channel 2.2 from Arabidopsis thaliana (Mouse-ear cress).